The following is a 178-amino-acid chain: Alkyl hydroperoxide reductase AhpD (178 aa).

The active-site Proton donor is Cys131. Cys131 and Cys134 form a disulfide bridge. Cys134 serves as the catalytic Cysteine sulfenic acid (-SOH) intermediate.

This sequence belongs to the AhpD family.

It catalyses the reaction N(6)-[(R)-dihydrolipoyl]-L-lysyl-[lipoyl-carrier protein] + a hydroperoxide = N(6)-[(R)-lipoyl]-L-lysyl-[lipoyl-carrier protein] + an alcohol + H2O. Its function is as follows. Antioxidant protein with alkyl hydroperoxidase activity. Required for the reduction of the AhpC active site cysteine residues and for the regeneration of the AhpC enzyme activity. This Methylocella silvestris (strain DSM 15510 / CIP 108128 / LMG 27833 / NCIMB 13906 / BL2) protein is Alkyl hydroperoxide reductase AhpD.